The chain runs to 427 residues: Glutamate-1-semialdehyde 2,1-aminomutase (427 aa).

N6-(pyridoxal phosphate)lysine is present on K265.

This sequence belongs to the class-III pyridoxal-phosphate-dependent aminotransferase family. HemL subfamily. Homodimer. Pyridoxal 5'-phosphate serves as cofactor.

It is found in the cytoplasm. The enzyme catalyses (S)-4-amino-5-oxopentanoate = 5-aminolevulinate. The protein operates within porphyrin-containing compound metabolism; protoporphyrin-IX biosynthesis; 5-aminolevulinate from L-glutamyl-tRNA(Glu): step 2/2. This is Glutamate-1-semialdehyde 2,1-aminomutase from Burkholderia cenocepacia (strain HI2424).